We begin with the raw amino-acid sequence, 424 residues long: 2,3-bisphosphoglycerate-independent phosphoglycerate mutase (424 aa).

The protein belongs to the BPG-independent phosphoglycerate mutase family. A-PGAM subfamily.

It carries out the reaction (2R)-2-phosphoglycerate = (2R)-3-phosphoglycerate. Its pathway is carbohydrate degradation; glycolysis; pyruvate from D-glyceraldehyde 3-phosphate: step 3/5. In terms of biological role, catalyzes the interconversion of 2-phosphoglycerate and 3-phosphoglycerate. This Aeropyrum pernix (strain ATCC 700893 / DSM 11879 / JCM 9820 / NBRC 100138 / K1) protein is 2,3-bisphosphoglycerate-independent phosphoglycerate mutase.